A 256-amino-acid polypeptide reads, in one-letter code: MAQSDPPKSPDPPLPTSIRNPQTPESGWDRIRELFQPNEQGHYPEEVGSIVKSAVTGALLGGIYGGLPAARHSKERYIQQSQAQIYQHRVEAVRSAHNAALRGFIRYGWRWGWRVAAFVTIFNSVSTGLTVYRDKLALSHYAAAGAVTGGLFRLNLGLVGLLSGSLIGAALGVPAGALISGLQSISGESIREKKRRERQELYENKVQEWSARLQVTDEVLEEMETSQQDPLEQQVEKIQELLQLPRNPAVSPKEGR.

Residues 1–27 are disordered; it reads MAQSDPPKSPDPPLPTSIRNPQTPESG. 2 helical membrane-spanning segments follow: residues 111–131 and 159–179; these read WGWR…GLTV and VGLL…GALI.

This sequence belongs to the Tim17/Tim22/Tim23 family. As to quaternary structure, associates with the intermediate 315 kDa subcomplex of incompletely assembled complex I.

Its subcellular location is the mitochondrion membrane. Its function is as follows. Chaperone protein involved in the assembly of the mitochondrial NADH:ubiquinone oxidoreductase complex (complex I). Participates in constructing the membrane arm of complex I. This is Complex I assembly factor TIMMDC1, mitochondrial (timmdc1) from Xenopus laevis (African clawed frog).